A 333-amino-acid chain; its full sequence is Cap-specific mRNA (nucleoside-2'-O-)-methyltransferase (333 aa).

Tyrosine 22 contacts mRNA. S-adenosyl-L-methionine is bound by residues glutamine 39, tyrosine 66, glycine 68, glycine 72, aspartate 95, arginine 97, valine 116, and aspartate 138. The interval 169 to 249 (PVASSLKWRC…NKIVRNKVVV (81 aa)) is binding to NPH-I. The segment at 169–333 (PVASSLKWRC…NSKRSVRSNK (165 aa)) is binding to Rap94. Lysine 175 acts as the For methyltransferase activity in catalysis. MRNA is bound by residues 177–180 (RCPF), aspartate 182, 205–207 (SAE), and glutamate 233. Residues 305–333 (SHEPIQRKISSKNSMSKNRNSKRSVRSNK) form a disordered region. Over residues 311–322 (RKISSKNSMSKN) the composition is skewed to low complexity. Basic residues predominate over residues 323–333 (RNSKRSVRSNK).

Belongs to the class I-like SAM-binding methyltransferase superfamily. Poxvirus/kinetoplastid 2'-O-MTase family. As to quaternary structure, interacts with poly(A) polymerase catalytic subunit OPG063. Interacts with OPG109 and OPG123; these interactions might help linking transcription to capping and polyadenylation.

It is found in the virion. It carries out the reaction a 5'-end (N(7)-methyl 5'-triphosphoguanosine)-ribonucleoside in mRNA + S-adenosyl-L-methionine = a 5'-end (N(7)-methyl 5'-triphosphoguanosine)-(2'-O-methyl-ribonucleoside) in mRNA + S-adenosyl-L-homocysteine + H(+). Its function is as follows. Displays methyltransferase, positive regulation of the poly(A) polymerase and transcription elongation activities. Involved in the modification of both mRNA ends and in intermediate and late gene positive transcription elongation. At the mRNAs 5' end, methylates the ribose 2' OH group of the first transcribed nucleotide, thereby producing a 2'-O-methylpurine cap. At the 3' end, functions as a processivity factor which stimulates the activity of the viral poly(A) polymerase OPG063 that creates mRNA's poly(A) tail. In the presence of OPG102, OPG063 does not dissociate from the RNA allowing tail elongation to around 250 adenylates. This Vaccinia virus (strain Western Reserve) (VACV) protein is Cap-specific mRNA (nucleoside-2'-O-)-methyltransferase (OPG102).